The chain runs to 497 residues: Pseudooxynicotine dehydrogenase (497 aa).

A signal peptide (tat-type signal) is located at residues 1–43 (MANDKGDISKDGVSRRKFLGGAVIGAAAAAGVGSQILSLSATA). FAD-binding residues include Ala-70, Glu-89, Arg-97, Trp-114, Val-286, Ser-462, and Ile-472.

It belongs to the flavin monoamine oxidase family. Homodimer. It depends on FAD as a cofactor. In terms of processing, predicted to be exported by the Tat system. The position of the signal peptide cleavage has not been experimentally proven.

The protein localises to the periplasm. It catalyses the reaction pseudooxynicotine + 2 Fe(III)-[cytochrome c] + H2O = 4-oxo-4-(pyridin-3-yl)butanal + methylamine + 2 Fe(II)-[cytochrome c] + 2 H(+). It functions in the pathway alkaloid degradation; nicotine degradation. With respect to regulation, strongly inhibited by Ag(+), Co(2+), Cu(2+) and Hg(2+). Functionally, involved in nicotine degradation. Catalyzes the deamination of pseudooxynicotine to 3-succinoylsemialdehyde-pyridine. The protein is Pseudooxynicotine dehydrogenase of Pseudomonas sp.